The chain runs to 198 residues: Cytochrome c oxidase assembly protein CtaG (198 aa).

Residues 1 to 12 lie on the Cytoplasmic side of the membrane; that stretch reads MADNGQADRKER. Residues 13-35 traverse the membrane as a helical; Signal-anchor for type II membrane protein segment; that stretch reads SNGVIVGTCLAFVAGMIGMAYAA. Over 36-198 the chain is Periplasmic; it reads VPLYDMFCRV…QVKAKAENKL (163 aa).

The protein belongs to the COX11/CtaG family.

It is found in the cell inner membrane. In terms of biological role, exerts its effect at some terminal stage of cytochrome c oxidase synthesis, probably by being involved in the insertion of the copper B into subunit I. In Rhizobium meliloti (strain 1021) (Ensifer meliloti), this protein is Cytochrome c oxidase assembly protein CtaG.